A 251-amino-acid polypeptide reads, in one-letter code: CDP-diacylglycerol pyrophosphatase (251 aa).

A helical membrane pass occupies residues 4-24 (AGLLFLVMIVIAVVAAGIGYW).

The protein belongs to the Cdh family.

It localises to the cell inner membrane. It carries out the reaction a CDP-1,2-diacyl-sn-glycerol + H2O = a 1,2-diacyl-sn-glycero-3-phosphate + CMP + 2 H(+). The protein operates within phospholipid metabolism; CDP-diacylglycerol degradation; phosphatidate from CDP-diacylglycerol: step 1/1. This Escherichia coli (strain SE11) protein is CDP-diacylglycerol pyrophosphatase.